The chain runs to 660 residues: Squalene--hopene cyclase (660 aa).

The PFTB 1 repeat unit spans residues 73 to 114 (EAKIGNYLRRVQGAHGGWPLVHDGEFDMSASVKAYFALKMIG). Aspartate 394 functions as the Proton donor in the catalytic mechanism. 2 PFTB repeats span residues 419-460 (IDRG…GALL) and 536-586 (IRKA…ALMA).

It belongs to the terpene cyclase/mutase family.

It is found in the cell membrane. It carries out the reaction squalene = hop-22(29)-ene. It catalyses the reaction squalene + H2O = hopan-22-ol. Its pathway is secondary metabolite biosynthesis; hopanoid biosynthesis. Its function is as follows. Catalyzes the cyclization of squalene into hopene. This Bradyrhizobium diazoefficiens (strain JCM 10833 / BCRC 13528 / IAM 13628 / NBRC 14792 / USDA 110) protein is Squalene--hopene cyclase (shc).